Consider the following 463-residue polypeptide: Bifunctional protein HldE (463 aa).

Residues 1–313 (MTGPMAVRTD…RALAALPDTD (313 aa)) form a ribokinase region. The active site involves Asp258. The segment at 331–463 (AAGGCFDLLH…LLARAAEGAR (133 aa)) is cytidylyltransferase.

The protein in the N-terminal section; belongs to the carbohydrate kinase PfkB family. It in the C-terminal section; belongs to the cytidylyltransferase family. In terms of assembly, homodimer.

It carries out the reaction D-glycero-beta-D-manno-heptose 7-phosphate + ATP = D-glycero-beta-D-manno-heptose 1,7-bisphosphate + ADP + H(+). The catalysed reaction is D-glycero-beta-D-manno-heptose 1-phosphate + ATP + H(+) = ADP-D-glycero-beta-D-manno-heptose + diphosphate. Its pathway is nucleotide-sugar biosynthesis; ADP-L-glycero-beta-D-manno-heptose biosynthesis; ADP-L-glycero-beta-D-manno-heptose from D-glycero-beta-D-manno-heptose 7-phosphate: step 1/4. The protein operates within nucleotide-sugar biosynthesis; ADP-L-glycero-beta-D-manno-heptose biosynthesis; ADP-L-glycero-beta-D-manno-heptose from D-glycero-beta-D-manno-heptose 7-phosphate: step 3/4. In terms of biological role, catalyzes the phosphorylation of D-glycero-D-manno-heptose 7-phosphate at the C-1 position to selectively form D-glycero-beta-D-manno-heptose-1,7-bisphosphate. Functionally, catalyzes the ADP transfer from ATP to D-glycero-beta-D-manno-heptose 1-phosphate, yielding ADP-D-glycero-beta-D-manno-heptose. This is Bifunctional protein HldE from Streptomyces coelicolor (strain ATCC BAA-471 / A3(2) / M145).